The sequence spans 367 residues: Leucine carboxyl methyltransferase 1 (367 aa).

S-adenosyl-L-methionine contacts are provided by residues R84, G109, D132, 187–188 (DL), and E212.

This sequence belongs to the methyltransferase superfamily. LCMT family.

It carries out the reaction [phosphatase 2A protein]-C-terminal L-leucine + S-adenosyl-L-methionine = [phosphatase 2A protein]-C-terminal L-leucine methyl ester + S-adenosyl-L-homocysteine. In terms of biological role, methylates the carboxyl group of the C-terminal leucine residue of protein phosphatase 2A catalytic subunits to form alpha-leucine ester residues. This Candida albicans (strain SC5314 / ATCC MYA-2876) (Yeast) protein is Leucine carboxyl methyltransferase 1 (PPM1).